Here is a 235-residue protein sequence, read N- to C-terminus: Transcriptional regulatory protein WalR (235 aa).

The Response regulatory domain occupies 4 to 117 (KILVVDDEKP…ELLARVKANL (114 aa)). 4-aspartylphosphate is present on Asp53. Positions 132–231 (SNEIHIGSLV…RRGVGYYLRN (100 aa)) form a DNA-binding region, ompR/PhoB-type.

Homodimer. Phosphorylated by WalK.

The protein localises to the cytoplasm. Member of the two-component regulatory system WalK/WalR involved in the regulation of the ftsAZ operon, the yocH, ykvT, cwlO, lytE, ydjM, yjeA, yoeB genes and the tagAB and tagDEF operons. Binds to the ftsAZ P1 promoter sequence in vitro. WalR has been shown to directly bind to the regulatory regions of yocH, ykvT, tagAB/tagDEF. Activates cwlO, lytE and ydjM and represses yoeB and yjeA. The protein is Transcriptional regulatory protein WalR of Bacillus subtilis (strain 168).